The chain runs to 200 residues: MAKGNPRKRAAATKDKWKMKEWYVVYAPDFFGNKEIGLTPADDPEKVIGRVIETTLKDLTGDFTKGQVKLYFQIYDVKGQNAYTKFKGHTLSRSYIRSLVRRRTTRVDGIFNITTKDGYKLRVMGMVIAYRRIQTSQERAIREIMRDIIYKKAEELNYKDFILEAVTGKMATEIAKEARKIYPIKRAEIRKIKVLAEPEA.

This sequence belongs to the eukaryotic ribosomal protein eS1 family.

The sequence is that of Small ribosomal subunit protein eS1 from Thermococcus onnurineus (strain NA1).